The primary structure comprises 530 residues: Histone-arginine methyltransferase CARMER (530 aa).

The 310-residue stretch at 141–450 (ASQYFQFYGY…QSYDVTIDLH (310 aa)) folds into the SAM-dependent MTase PRMT-type domain. S-adenosyl-L-methionine contacts are provided by Gln154, Arg163, Gly187, Glu209, Glu238, and Thr266. Residue Arg501 is modified to Asymmetric dimethylarginine; by autocatalysis.

It belongs to the class I-like SAM-binding methyltransferase superfamily. Protein arginine N-methyltransferase family. Homodimer. The dimethylated protein is the major form.

Its subcellular location is the cytoplasm. The protein localises to the nucleus. It carries out the reaction L-arginyl-[protein] + 2 S-adenosyl-L-methionine = N(omega),N(omega)-dimethyl-L-arginyl-[protein] + 2 S-adenosyl-L-homocysteine + 2 H(+). Its function is as follows. Methylates (mono- and asymmetric dimethylation) the guanidino nitrogens of arginyl residues in proteins. May methylate histone H3 at 'Arg-17' and activate transcription via chromatin remodeling. The chain is Histone-arginine methyltransferase CARMER (Art4) from Drosophila erecta (Fruit fly).